A 656-amino-acid chain; its full sequence is Fidgetin-like protein 1 (656 aa).

Over residues 293–302 the composition is skewed to polar residues; sequence KYSNQPQRNP. Residues 293 to 354 form a disordered region; it reads KYSNQPQRNP…QGNSEMNAPS (62 aa). Positions 331–340 are enriched in basic and acidic residues; that stretch reads RQEDVQDSNR. Residues Ala386 and 426–431 contribute to the ATP site; that span reads GTGKTL.

It belongs to the AAA ATPase family. As to quaternary structure, hexamer. Mg(2+) serves as cofactor.

Its subcellular location is the nucleus. The protein resides in the cytoplasm. It localises to the perinuclear region. The enzyme catalyses ATP + H2O = ADP + phosphate + H(+). Its function is as follows. May be involved in DNA double-strand break (DBS) repair via homologous recombination (HR). May regulate osteoblast proliferation and differentiation. The chain is Fidgetin-like protein 1 (fignl1) from Xenopus tropicalis (Western clawed frog).